The chain runs to 113 residues: Iron-sulfur cluster insertion protein ErpA (113 aa).

The iron-sulfur cluster site is built by C41, C105, and C107.

It belongs to the HesB/IscA family. As to quaternary structure, homodimer. Iron-sulfur cluster serves as cofactor.

Required for insertion of 4Fe-4S clusters for at least IspG. This Actinobacillus pleuropneumoniae serotype 7 (strain AP76) protein is Iron-sulfur cluster insertion protein ErpA.